The chain runs to 304 residues: Ribosomal RNA small subunit methyltransferase H (304 aa).

S-adenosyl-L-methionine-binding positions include 37–39 (GGH), D57, F79, D100, and H107.

It belongs to the methyltransferase superfamily. RsmH family.

The protein resides in the cytoplasm. It carries out the reaction cytidine(1402) in 16S rRNA + S-adenosyl-L-methionine = N(4)-methylcytidine(1402) in 16S rRNA + S-adenosyl-L-homocysteine + H(+). In terms of biological role, specifically methylates the N4 position of cytidine in position 1402 (C1402) of 16S rRNA. The polypeptide is Ribosomal RNA small subunit methyltransferase H (Bacteroides fragilis (strain YCH46)).